The sequence spans 338 residues: mRNA decay activator protein ZFP36L1 (338 aa).

Positions 1 to 111 (MTTTLVSATI…QKQPGGGQVN (111 aa)) are necessary and sufficient for the association with mRNA decay enzymes and mRNA decay activation. At serine 54 the chain carries Phosphoserine; by MAPKAPK2. The residue at position 90 (serine 90) is a Phosphoserine; by PKB/AKT1. Serine 92 bears the Phosphoserine; by PKB/AKT1 and MAPKAPK2 mark. The disordered stretch occupies residues 93-113 (EGGERLLPTQKQPGGGQVNSS). 2 consecutive C3H1-type zinc fingers follow at residues 114 to 142 (RYKTELCRPFEENGACKYGDKCQFAHGIH) and 152 to 180 (KYKTELCRTFHTIGFCPYGPRCHFIHNAE). The interval 185–338 (LAGARDLSAD…IFSRLSISDD (154 aa)) is necessary for mRNA decay activation. The residue at position 203 (serine 203) is a Phosphoserine; by PKB/AKT1 and MAPKAPK2. The segment at 273-338 (SPTTFLFRPM…IFSRLSISDD (66 aa)) is disordered. Residues 296–318 (QDSLSDQEGYLSSSSSSHSGSDS) show a composition bias toward low complexity. The residue at position 318 (serine 318) is a Phosphoserine. The residue at position 334 (serine 334) is a Phosphoserine; by RPS6KA1.

Associates with the cytoplasmic CCR4-NOT deadenylase and RNA exosome complexes to trigger ARE-containing mRNA deadenylation and decay processes. Interacts with CNOT1. Interacts (via N-terminus) with CNOT6. Interacts with CNOT7; this interaction is inhibited in response to phorbol 12-myristate 13-acetate (PMA) treatment in a p38 MAPK-dependent manner. Interacts with DCP1A. Interacts (via N-terminus) with DCP2. Interacts (via N-terminus) with EXOSC2. Interacts with XRN1. Interacts (via phosphorylated form) with YWHAB; this interaction occurs in a protein kinase AKT1-dependent manner. Interacts (via phosphorylated form) with YWHAZ; this interaction occurs in a p38 MAPK- and AKT-signaling pathways. In terms of processing, phosphorylated. Phosphorylated by RPS6KA1 at Ser-334 upon phorbol 12-myristate 13-acetate (PMA) treatment; this phosphorylation results in dissociation of the CCR4-NOT deadenylase complex and induces p38 MAPK-mediated stabilization of the low-density lipoprotein receptor LDLR mRNA. Phosphorylated by protein kinase AKT1 at Ser-92 and Ser-203 in response to insulin; these phosphorylations stabilize ZFP36L1, increase the association with 14-3-3 proteins and mediate ARE-containing mRNA stabilization. AKT1-mediated phosphorylation at Ser-92 does not impair ARE-containing RNA-binding. Phosphorylated at Ser-54, Ser-92 and Ser-203 by MAPKAPK2; these phosphorylations increase the association with 14-3-3 proteins and mediate ARE-containing mRNA stabilization in a protein kinase AKT1-independent manner. MAPKAPK2-mediated phosphorylations at Ser-54, Ser-92 and Ser-203 do not impair ARE-containing RNA-binding. Phosphorylations increase the association with 14-3-3 proteins and mediate ARE-containing mRNA stabilization during early adipogenesis in a p38 MAPK- and AKT-dependent manner. Ubiquitinated. Ubiquitination leads to proteasomal degradation, a process inhibited by phosphorylations at Ser-90, Ser-92 and Ser-203. Expressed mainly in the basal epidermal layer, weakly in the suprabasal epidermal layers. Expressed in epidermal keratinocytes (at protein level). Expressed in osteoblasts.

Its subcellular location is the nucleus. The protein localises to the cytoplasm. It is found in the cytoplasmic granule. The protein resides in the P-body. Its function is as follows. Zinc-finger RNA-binding protein that destabilizes several cytoplasmic AU-rich element (ARE)-containing mRNA transcripts by promoting their poly(A) tail removal or deadenylation, and hence provide a mechanism for attenuating protein synthesis. Acts as a 3'-untranslated region (UTR) ARE mRNA-binding adapter protein to communicate signaling events to the mRNA decay machinery. Functions by recruiting the CCR4-NOT deadenylase complex and components of the cytoplasmic RNA decay machinery to the bound ARE-containing mRNAs, and hence promotes ARE-mediated mRNA deadenylation and decay processes. Also induces the degradation of ARE-containing mRNAs even in absence of poly(A) tail. Binds to 3'-UTR ARE of numerous mRNAs. Positively regulates early adipogenesis by promoting ARE-mediated mRNA decay of immediate early genes (IEGs). Promotes ARE-mediated mRNA decay of mineralocorticoid receptor NR3C2 mRNA in response to hypertonic stress. Negatively regulates hematopoietic/erythroid cell differentiation by promoting ARE-mediated mRNA decay of the transcription factor STAT5B mRNA. Positively regulates monocyte/macrophage cell differentiation by promoting ARE-mediated mRNA decay of the cyclin-dependent kinase CDK6 mRNA. Promotes degradation of ARE-containing pluripotency-associated mRNAs in embryonic stem cells (ESCs), such as NANOG, through a fibroblast growth factor (FGF)-induced MAPK-dependent signaling pathway, and hence attenuates ESC self-renewal and positively regulates mesendoderm differentiation. May play a role in mediating pro-apoptotic effects in malignant B-cells by promoting ARE-mediated mRNA decay of BCL2 mRNA. In association with ZFP36L2 maintains quiescence on developing B lymphocytes by promoting ARE-mediated decay of several mRNAs encoding cell cycle regulators that help B cells progress through the cell cycle, and hence ensuring accurate variable-diversity-joining (VDJ) recombination and functional immune cell formation. Together with ZFP36L2 is also necessary for thymocyte development and prevention of T-cell acute lymphoblastic leukemia (T-ALL) transformation by promoting ARE-mediated mRNA decay of the oncogenic transcription factor NOTCH1 mRNA. Participates in the delivery of target ARE-mRNAs to processing bodies (PBs). In addition to its cytosolic mRNA-decay function, plays a role in the regulation of nuclear mRNA 3'-end processing; modulates mRNA 3'-end maturation efficiency of the DLL4 mRNA through binding with an ARE embedded in a weak noncanonical polyadenylation (poly(A)) signal in endothelial cells. Also involved in the regulation of stress granule (SG) and P-body (PB) formation and fusion. Plays a role in vasculogenesis and endocardial development. Plays a role in the regulation of keratinocyte proliferation, differentiation and apoptosis. Plays a role in myoblast cell differentiation. The polypeptide is mRNA decay activator protein ZFP36L1 (Homo sapiens (Human)).